Consider the following 1341-residue polypeptide: Restriction of telomere capping protein 1 (1341 aa).

The segment at 1 to 39 (MSLSPHVENASIPKGSTPIPKNRNVSSIGKGEFLGSSSS) is disordered. WD repeat units follow at residues 207 to 248 (NKFS…SIDN), 256 to 296 (EHTR…SKSS), 305 to 342 (TASDSIRDVKWMPGYNFASKNDQGSSTYGNLKSGYKFA), 367 to 406 (AHTGPGLCLNWHPNQEYIATGGRDGKCCLWFVGDNANAAE), 439 to 486 (NTGY…IPKH), and 489 to 527 (LSETPSLGLVWWDENLIFNIDKGTRINGWDINKEPTVLE). 5 disordered regions span residues 559–593 (PELQPTSSTTCKKHPGTIKNPKNGNPENQGIIGGI), 600–619 (TGLTSFTPERPPTLKAGPTF), 630–651 (ASSFNSSSASLTSLTPQTENRE), 736–765 (KNATETHGDNTTTTNNNDDGDDDDDDDDDD), and 789–830 (NEKV…DRAR). A compositionally biased stretch (low complexity) spans 630–644 (ASSFNSSSASLTSLT). The segment covering 753-765 (DDGDDDDDDDDDD) has biased composition (acidic residues). Residues 814–823 (SSISSISASR) show a composition bias toward low complexity. Residues 843-883 (KIQTLVDLISIATHNASVYLSIDDLTNFKIWILIRDSLLWD) form a WD 7 repeat. Disordered regions lie at residues 941–962 (AFRANSDEPSDAEKKPVSKLKE) and 1013–1043 (DEHEHQEEEQPHDSPTKSAQFHASPIAKSIP). 2 stretches are compositionally biased toward basic and acidic residues: residues 951 to 962 (DAEKKPVSKLKE) and 1015 to 1027 (HEHQEEEQPHDSP). Serine 1036, serine 1080, serine 1087, serine 1089, serine 1123, and serine 1133 each carry phosphoserine. WD repeat units lie at residues 1129 to 1169 (SRPD…KQLY) and 1216 to 1255 (LFGIAADVLKYCPFEDIMGSEGDQSSIRLFCERCGELITN). The RING-type; degenerate zinc finger occupies 1293–1335 (CVLCERPLKKLTMVILPCGHEGHFQCIQEWFLDENEQECPGGC).

It belongs to the WD repeat RTC1 family. In terms of assembly, component of the SEA complex composed of at least IML1/SEA1, RTC1/SEA2, MTC5/SEA3, NPR2, NPR3, SEA4, SEC13 and SEH1. Interacts with ribosomes.

Its subcellular location is the vacuole membrane. Functionally, component of the SEA complex which coats the vacuolar membrane and is involved in intracellular trafficking, autophagy, response to nitrogen starvation, and amino acid biogenesis. May be involved in a process influencing telomere capping. The protein is Restriction of telomere capping protein 1 (RTC1) of Saccharomyces cerevisiae (strain ATCC 204508 / S288c) (Baker's yeast).